Reading from the N-terminus, the 215-residue chain is LexA repressor (215 aa).

The segment at residues 28-48 is a DNA-binding region (H-T-H motif); that stretch reads RAEIAAELGFSSPNAAEEHLR. Catalysis depends on for autocatalytic cleavage activity residues Ser-133 and Lys-170.

The protein belongs to the peptidase S24 family. As to quaternary structure, homodimer.

It carries out the reaction Hydrolysis of Ala-|-Gly bond in repressor LexA.. Functionally, represses a number of genes involved in the response to DNA damage (SOS response), including recA and lexA. In the presence of single-stranded DNA, RecA interacts with LexA causing an autocatalytic cleavage which disrupts the DNA-binding part of LexA, leading to derepression of the SOS regulon and eventually DNA repair. The polypeptide is LexA repressor (Burkholderia vietnamiensis (strain G4 / LMG 22486) (Burkholderia cepacia (strain R1808))).